Reading from the N-terminus, the 219-residue chain is Flagellin B4 (219 aa).

Residues 1–5 (MHRKG) constitute a propeptide that is removed on maturation.

This sequence belongs to the archaeal flagellin family.

It localises to the archaeal flagellum. Functionally, flagellin is the subunit protein which polymerizes to form the filaments of archaeal flagella. This Pyrococcus abyssi (strain GE5 / Orsay) protein is Flagellin B4 (flaB4).